We begin with the raw amino-acid sequence, 525 residues long: Putative ribose/galactose/methyl galactoside import ATP-binding protein (525 aa).

Polar residues predominate over residues 1–15 (MFGSATANPPAQRNL). Residues 1 to 23 (MFGSATANPPAQRNLPSGDGDGG) form a disordered region. ABC transporter domains are found at residues 33–269 (LEIS…VGRE) and 279–523 (KPAG…SGHK). 65-72 (GENGAGKS) is an ATP binding site.

Belongs to the ABC transporter superfamily. Carbohydrate importer 2 (CUT2) (TC 3.A.1.2) family.

The protein resides in the cell inner membrane. The enzyme catalyses D-ribose(out) + ATP + H2O = D-ribose(in) + ADP + phosphate + H(+). It carries out the reaction D-galactose(out) + ATP + H2O = D-galactose(in) + ADP + phosphate + H(+). Functionally, part of an ABC transporter complex involved in carbohydrate import. Could be involved in ribose, galactose and/or methyl galactoside import. Responsible for energy coupling to the transport system. The chain is Putative ribose/galactose/methyl galactoside import ATP-binding protein from Pseudomonas syringae pv. syringae (strain B728a).